The following is a 188-amino-acid chain: Elongation factor P (188 aa).

It belongs to the elongation factor P family.

It is found in the cytoplasm. It participates in protein biosynthesis; polypeptide chain elongation. Its function is as follows. Involved in peptide bond synthesis. Stimulates efficient translation and peptide-bond synthesis on native or reconstituted 70S ribosomes in vitro. Probably functions indirectly by altering the affinity of the ribosome for aminoacyl-tRNA, thus increasing their reactivity as acceptors for peptidyl transferase. The polypeptide is Elongation factor P (Bradyrhizobium sp. (strain BTAi1 / ATCC BAA-1182)).